Reading from the N-terminus, the 212-residue chain is uncharacterized protein (212 aa).

This is an uncharacterized protein from Aquifex aeolicus (strain VF5).